The chain runs to 479 residues: MDKLINKPQPLTSDISTSGFIYFAVVFVAIMGYLLFKNLLFLFFFKRYPKNTPKIGVGNITTIAMIIAVAVSIVLVLMALAGGLAAALFRGYPGFRVTLELILVKISGLLFGPIVGIFSAATIDFLTVIFSGGVFNVGYVLGAILTGMIAGILREVLISTALLHNRNLSDFAYLVLSIGMVIAAFLITQFFVLGISNNLKEIKGDEEFRLKFNAPSIVFELSLTQYANILLYFTIAIVIAMLVLYIVWLVKQRHLSFEHSRFFYRSYKHANHQFTLFVLTKENWFYLILNVITLASTSLLMINIAFIPIFDTQTTGQTYEFWLLARLLFAPVIFLLDIIVIYPILLLLTPLMLKGFKTAVSKNQRKTLKQSFTDLQSVVLPIINKRKHQQLRQEELKRLARATHFDLTEGEMEKLLVEFKTITQSFDRVMNIDTTSVEPMYAPFNTSPTPLRKDKVIVEKHPEKLLANCKEMSVGFVKV.

8 helical membrane-spanning segments follow: residues 25-45, 63-83, 110-130, 133-153, 175-195, 229-249, 287-307, and 328-348; these read VVFVAIMGYLLFKNLLFLFFF, IAMIIAVAVSIVLVLMALAGG, LFGPIVGIFSAATIDFLTVIF, GVFNVGYVLGAILTGMIAGIL, VLSIGMVIAAFLITQFFVLGI, ILLYFTIAIVIAMLVLYIVWL, LILNVITLASTSLLMINIAFI, and LFAPVIFLLDIIVIYPILLLL.

It in the C-terminal section; belongs to the GatC family.

It is found in the cell membrane. This is an uncharacterized protein from Mycoplasma pneumoniae (strain ATCC 29342 / M129 / Subtype 1) (Mycoplasmoides pneumoniae).